We begin with the raw amino-acid sequence, 637 residues long: Choline O-acetyltransferase (637 aa).

The span at 1–13 (MPVSKREQSKDTG) shows a compositional bias: basic and acidic residues. The interval 1–20 (MPVSKREQSKDTGDPCALPK) is disordered. His329 (proton acceptor) is an active-site residue. CoA contacts are provided by residues 407–419 (GKEF…MSPD), Ser445, and Gln545.

This sequence belongs to the carnitine/choline acetyltransferase family.

It catalyses the reaction choline + acetyl-CoA = acetylcholine + CoA. Its function is as follows. Catalyzes the reversible synthesis of acetylcholine (ACh) from acetyl CoA and choline at cholinergic synapses. This is Choline O-acetyltransferase (chat) from Danio rerio (Zebrafish).